Reading from the N-terminus, the 363-residue chain is Peptide chain release factor 1 (363 aa).

Q237 carries the N5-methylglutamine modification. Positions 281–302 are disordered; that stretch reads QQAEDEKSHAEEQTIRRSLVAS. The span at 282 to 295 shows a compositional bias: basic and acidic residues; that stretch reads QAEDEKSHAEEQTI.

It belongs to the prokaryotic/mitochondrial release factor family. In terms of processing, methylated by PrmC. Methylation increases the termination efficiency of RF1.

It is found in the cytoplasm. Its function is as follows. Peptide chain release factor 1 directs the termination of translation in response to the peptide chain termination codons UAG and UAA. The polypeptide is Peptide chain release factor 1 (Psychromonas ingrahamii (strain DSM 17664 / CCUG 51855 / 37)).